Consider the following 307-residue polypeptide: Holliday junction branch migration complex subunit RuvB (307 aa).

The interval 1–167 is large ATPase domain (RuvB-L); the sequence is MKLQIKPPNT…FGVILNINYY (167 aa). 8 residues coordinate ATP: I5, G48, K51, T52, T53, R157, Y167, and R204. T52 lines the Mg(2+) pocket. The small ATPAse domain (RuvB-S) stretch occupies residues 168 to 233; the sequence is SNAEIEKMVS…DLEGLFKNLM (66 aa). The segment at 236-307 is head domain (RuvB-H); that stretch reads KNGLQSIDVQ…NSGREYLVNF (72 aa). The DNA site is built by R270, K289, and R294.

Belongs to the RuvB family. In terms of assembly, homohexamer. Forms an RuvA(8)-RuvB(12)-Holliday junction (HJ) complex. HJ DNA is sandwiched between 2 RuvA tetramers; dsDNA enters through RuvA and exits via RuvB. An RuvB hexamer assembles on each DNA strand where it exits the tetramer. Each RuvB hexamer is contacted by two RuvA subunits (via domain III) on 2 adjacent RuvB subunits; this complex drives branch migration. In the full resolvosome a probable DNA-RuvA(4)-RuvB(12)-RuvC(2) complex forms which resolves the HJ.

Its subcellular location is the cytoplasm. The enzyme catalyses ATP + H2O = ADP + phosphate + H(+). In terms of biological role, the RuvA-RuvB-RuvC complex processes Holliday junction (HJ) DNA during genetic recombination and DNA repair, while the RuvA-RuvB complex plays an important role in the rescue of blocked DNA replication forks via replication fork reversal (RFR). RuvA specifically binds to HJ cruciform DNA, conferring on it an open structure. The RuvB hexamer acts as an ATP-dependent pump, pulling dsDNA into and through the RuvAB complex. RuvB forms 2 homohexamers on either side of HJ DNA bound by 1 or 2 RuvA tetramers; 4 subunits per hexamer contact DNA at a time. Coordinated motions by a converter formed by DNA-disengaged RuvB subunits stimulates ATP hydrolysis and nucleotide exchange. Immobilization of the converter enables RuvB to convert the ATP-contained energy into a lever motion, pulling 2 nucleotides of DNA out of the RuvA tetramer per ATP hydrolyzed, thus driving DNA branch migration. The RuvB motors rotate together with the DNA substrate, which together with the progressing nucleotide cycle form the mechanistic basis for DNA recombination by continuous HJ branch migration. Branch migration allows RuvC to scan DNA until it finds its consensus sequence, where it cleaves and resolves cruciform DNA. The protein is Holliday junction branch migration complex subunit RuvB of Mycoplasma genitalium (strain ATCC 33530 / DSM 19775 / NCTC 10195 / G37) (Mycoplasmoides genitalium).